The primary structure comprises 1150 residues: RNA polymerase-associated protein CTR9 (1150 aa).

13 TPR repeats span residues 143 to 176, 177 to 210, 212 to 245, 247 to 282, 320 to 353, 355 to 388, 432 to 464, 471 to 504, 594 to 627, 643 to 677, 679 to 711, 712 to 745, and 748 to 781; these read VRAWFYLFERDKSTNKYELADQQFNYVVKTNPKN, VLPLIGKAVIAFNKKDYKTAIYYFRKAIRQCRHT, ADLRVGIGHCFAKMGMMDKAKTAFERAMEIEPYN, SAMCGLGIILLNTYDHDSLKHAVSLFGRSYNLQTDH, AEAFYQMGRCRHAQGQFDGAYKYYYQARQANNGE, TLAHYGLGQMYIHRNEIEEAIKCFDTVHKRLPNN, YEACIDLAQLLEATDPKRSLELYENAIDLLVTN, PEMLNNVGALYMSMKQYEKAEHHFKRAKERLEEQ, PIVWTLIGNLHFAKNEWMPAQKKFEFILSKIFNN, FEQLLNPSRKKEDEKKYIDRALQMYQKALKLQPKN, YAANGIGCVLAYKRNWNDARDVFSQVRESTSEF, YDVWLNIAHVCMEREQWMAAVQMYSSAMKKFRKE, and STLQHYLAKAYYRANMLNEAKEALECAMLDQLDN. Coiled coils occupy residues 848–916 and 972–1028; these read AEEA…NLRL and ERRE…AKQS. The interval 935-1150 is disordered; the sequence is KRRGGGGRKR…KKKVIESDSD (216 aa). Residues 975-992 show a composition bias toward basic residues; the sequence is ERRKKDKAAKKASRKKRE. Composition is skewed to basic and acidic residues over residues 993 to 1005, 1013 to 1024, 1060 to 1084, and 1132 to 1150; these read RRDSGGPDSNRRD, EERDRKLQEKLS, DPRPPVDEFDSPTRTDSDSDRETTT, and RDSDGSDAPKKKVIESDSD.

As to quaternary structure, component of the PAF1 complex which consists of at least cdc-73, ctr-9, leo-1, pafo-1 and rtfo-1.

The protein localises to the nucleus. Its function is as follows. Component of the PAF1 complex which is a multifunctional complex involved in transcription initiation via genetic interactions with TATA-binding proteins, elongation and transcription-coupled histone modification. Ctr-9 is required for epidermal microtubule organization during morphogenesis. This chain is RNA polymerase-associated protein CTR9, found in Caenorhabditis elegans.